Reading from the N-terminus, the 516-residue chain is Probable cytochrome P450 9f2 (516 aa).

Cys460 contacts heme.

Belongs to the cytochrome P450 family. It depends on heme as a cofactor.

It localises to the endoplasmic reticulum membrane. The protein localises to the microsome membrane. May be involved in the metabolism of insect hormones and in the breakdown of synthetic insecticides. In Drosophila melanogaster (Fruit fly), this protein is Probable cytochrome P450 9f2 (Cyp9f2).